Reading from the N-terminus, the 205-residue chain is Ras-related protein Rab-1A (205 aa).

S2 carries the N-acetylserine modification. Positions 20, 21, 23, 24, 25, 26, 38, and 43 each coordinate GTP. S25 contributes to the Mg(2+) binding site. The Switch 1 signature appears at 34–48 (DTYTESYISTIGVDF). Position 43 (T43) interacts with Mg(2+). Glycyl lysine isopeptide (Lys-Gly) (interchain with G-Cter in ubiquitin) cross-links involve residues K49 and K61. D66 contacts Mg(2+). The short motif at 66–83 (DTAGQERFRTITSSYYRG) is the Switch 2 element. Residues G69, N124, K125, D127, A155, and K156 each coordinate GTP. Residues 178–205 (PGATAGGAEKSNVKIQSTPVKQSGGGCC) are disordered. At S194 the chain carries Phosphoserine. S-geranylgeranyl cysteine attachment occurs at residues C204 and C205.

The protein belongs to the small GTPase superfamily. Rab family. As to quaternary structure, may interact with YIPF5. Interacts with C9orf72; the interaction mediates recruitment of RAB1A to the ATG1/ULK1 kinase complex. Interacts with GDI1; this promotes dissociation from membranes. Mg(2+) serves as cofactor. In terms of processing, phosphorylated by CDK1 kinase during mitosis. Post-translationally, ubiquitinated via 'Lys-11'-linked ubiquitination on Lys-49 and Lys-61; impairing the recruitment of guanosine diphosphate (GDP) dissociation inhibitor 1/GDI1.

It is found in the golgi apparatus. The protein resides in the endoplasmic reticulum. The protein localises to the early endosome. It localises to the cytoplasm. Its subcellular location is the cytosol. It is found in the membrane. The protein resides in the melanosome. It catalyses the reaction GTP + H2O = GDP + phosphate + H(+). Regulated by guanine nucleotide exchange factors (GEFs) which promote the exchange of bound GDP for free GTP. Regulated by GTPase activating proteins (GAPs) which increase the GTP hydrolysis activity. Inhibited by GDP dissociation inhibitors (GDIs). Its function is as follows. The small GTPases Rab are key regulators of intracellular membrane trafficking, from the formation of transport vesicles to their fusion with membranes. Rabs cycle between an inactive GDP-bound form and an active GTP-bound form that is able to recruit to membranes different sets of downstream effectors directly responsible for vesicle formation, movement, tethering and fusion. RAB1A regulates vesicular protein transport from the endoplasmic reticulum (ER) to the Golgi compartment and on to the cell surface, and plays a role in IL-8 and growth hormone secretion. Required to modulate the compacted morphology of the Golgi. Regulates the level of CASR present at the cell membrane. Plays a role in cell adhesion and cell migration, via its role in protein trafficking. Plays a role in autophagosome assembly and cellular defense reactions against pathogenic bacteria. Plays a role in microtubule-dependent protein transport by early endosomes and in anterograde melanosome transport. The polypeptide is Ras-related protein Rab-1A (RAB1A) (Canis lupus familiaris (Dog)).